Reading from the N-terminus, the 173-residue chain is Photosystem I assembly protein Ycf3 (173 aa).

TPR repeat units follow at residues 35–68, 72–105, and 120–153; these read AYVY…EENA, GETL…NPKQ, and GRTA…NPGG.

It belongs to the Ycf3 family.

It is found in the cellular thylakoid membrane. Functionally, essential for the assembly of the photosystem I (PSI) complex. May act as a chaperone-like factor to guide the assembly of the PSI subunits. This Synechococcus sp. (strain CC9311) protein is Photosystem I assembly protein Ycf3.